We begin with the raw amino-acid sequence, 364 residues long: Histidinol-phosphate aminotransferase 1 (364 aa).

K211 carries the post-translational modification N6-(pyridoxal phosphate)lysine.

It belongs to the class-II pyridoxal-phosphate-dependent aminotransferase family. Histidinol-phosphate aminotransferase subfamily. Homodimer. Requires pyridoxal 5'-phosphate as cofactor.

It carries out the reaction L-histidinol phosphate + 2-oxoglutarate = 3-(imidazol-4-yl)-2-oxopropyl phosphate + L-glutamate. Its pathway is amino-acid biosynthesis; L-histidine biosynthesis; L-histidine from 5-phospho-alpha-D-ribose 1-diphosphate: step 7/9. In Legionella pneumophila (strain Paris), this protein is Histidinol-phosphate aminotransferase 1.